Here is a 972-residue protein sequence, read N- to C-terminus: Structural polyprotein (972 aa).

Asp-26 lines the a divalent metal cation pocket. The region spanning Ser-509–Ala-734 is the Peptidase S50 domain. The active-site Nucleophile is Ser-633. Lys-674 is a catalytic residue. Disordered regions lie at residues Ser-797 to Ala-817 and Gly-917 to Val-972. Over residues Lys-801–Ala-817 the composition is skewed to basic and acidic residues.

Homotrimer. A central divalent metal (possibly cobalt) stabilizes the VP2 trimer. As to quaternary structure, homodimer. interacts (via C-terminus) with VP1 in the cytoplasm. Interacts with VP2. Post-translationally, specific enzymatic cleavages yield mature proteins. Capsid assembly seems to be regulated by polyprotein processing. The protease VP4 cleaves itself off the polyprotein, thus releasing pre-VP2 and VP3 within the infected cell. During capsid assembly, the C-terminus of pre-VP2 is further processed by VP4, giving rise to VP2, the external capsid protein and three small peptides that all stay closely associated with the capsid.

It is found in the virion. The protein localises to the host cytoplasm. Its function is as follows. Capsid protein VP2 self assembles to form an icosahedral capsid with a T=13 symmetry, about 70 nm in diameter, and consisting of 260 VP2 trimers. The capsid encapsulates the genomic dsRNA. VP2 is also involved in attachment and entry into the host cell. In terms of biological role, the precursor of VP2 plays an important role in capsid assembly. First, pre-VP2 and VP2 oligomers assemble to form a procapsid. Then, the pre-VP2 intermediates may be processed into VP2 proteins by proteolytic cleavage mediated by VP4 to obtain the mature virion. The final capsid is composed of pentamers and hexamers but VP2 has a natural tendency to assemble into all-pentameric structures. Therefore pre-VP2 may be required to allow formation of the hexameric structures. Functionally, protease VP4 is a serine protease that cleaves the polyprotein into its final products. Pre-VP2 is first partially cleaved, and may be completely processed by VP4 upon capsid maturation. Capsid protein VP3 plays a key role in virion assembly by providing a scaffold for the capsid composed of VP2. May self-assemble to form a T=4-like icosahedral inner-capsid composed of at least 180 trimers. Plays a role in genomic RNA packaging by recruiting VP1 into the capsid and interacting with the dsRNA genome segments to form a ribonucleoprotein complex. Additionally, the interaction of the VP3 C-terminal tail with VP1 removes the inherent structural blockade of the polymerase active site. Thus, VP3 can also function as a transcriptional activator. Its function is as follows. Structural peptide 1 is a small peptide derived from the C-terminus of pre-VP2. It destabilizes and perforates cell membranes, suggesting a role during viral entry. In terms of biological role, structural peptide 2 is a small peptide derived from the C-terminus of pre-VP2. It is not essential for virus viability, but viral growth is affected when this protein is absent. Functionally, structural peptide 3 is a small peptide derived from pre-VP2 C-terminus. It is not essential for virus viability, but viral growth is affected when this protein is absent. In Oncorhynchus mykiss (Rainbow trout), this protein is Structural polyprotein.